The primary structure comprises 274 residues: N-acetylmuramic acid 6-phosphate etherase (274 aa).

Positions 52–215 constitute an SIS domain; the sequence is IIPRMEQGGR…STSIMIRLGR (164 aa). The active-site Proton donor is Glu-80. Glu-111 is a catalytic residue.

The protein belongs to the GCKR-like family. MurNAc-6-P etherase subfamily. As to quaternary structure, homodimer.

It carries out the reaction N-acetyl-D-muramate 6-phosphate + H2O = N-acetyl-D-glucosamine 6-phosphate + (R)-lactate. It functions in the pathway amino-sugar metabolism; N-acetylmuramate degradation. In terms of biological role, specifically catalyzes the cleavage of the D-lactyl ether substituent of MurNAc 6-phosphate, producing GlcNAc 6-phosphate and D-lactate. The polypeptide is N-acetylmuramic acid 6-phosphate etherase (Porphyromonas gingivalis (strain ATCC BAA-308 / W83)).